The sequence spans 91 residues: Probable Fe(2+)-trafficking protein (91 aa).

It belongs to the Fe(2+)-trafficking protein family.

Functionally, could be a mediator in iron transactions between iron acquisition and iron-requiring processes, such as synthesis and/or repair of Fe-S clusters in biosynthetic enzymes. This Burkholderia cenocepacia (strain ATCC BAA-245 / DSM 16553 / LMG 16656 / NCTC 13227 / J2315 / CF5610) (Burkholderia cepacia (strain J2315)) protein is Probable Fe(2+)-trafficking protein.